A 635-amino-acid chain; its full sequence is MVSIRLPDGSVRQYEHPVTVAEVAASIGPGLAKAALGGKLDGELVDTSAVIDRDASLAIVTDKDADGLDIIRHSTAHLLAYAVKELYPDAQVTIGPVIDNGFYYDFSYNRPFTPEDLEKIEKRMQELVKKDEPVTRRVVSRDEAAGYFRSIGEKYKAEIIESIPQSDEIKLYSHGGFTDLCRGPHVPSTGKLKVFKLMKVAGAYWRGDSKNEQLQRIYGTAWTRKEDQDQYLHMLEEAEKRDHRKLGKQLDLFHMQEESPGMVFWHPKGWALWQQVEQYMRRRVNEAGYLEIKTPMIMDRSLWEASGHWQNYRENMFTTESEKRDYAIKPMNCPGHVQVFKHGLRSYRDLPLRYAEFGSCHRNEASGALHGLMRVRGFVQDDAHIFCTEDQFISESIAFNTLAMSVYKDFGFDHIDIKLSLRPEQRAGTDETWDRAEQGLRDALTACGLTWEELPGEGAFYGPKIEYHIKDALGRSWQCGTLQLDMVLPERLGAEYVADDSSRRRPVMLHRAIVGSMERFLGILIEHHAGAMPAWLAPFQAVVLNIAESQAEYAQSLAQSLQKQGVRVTADLRNEKISYKIREHTLEKVPYLLVVGDKERDAQTVAVRARGGVDLGVMPVEAFVERLQEDLRSFK.

Positions 1–61 (MVSIRLPDGS…DRDASLAIVT (61 aa)) constitute a TGS domain. A catalytic region spans residues 242-533 (DHRKLGKQLD…LIEHHAGAMP (292 aa)). 3 residues coordinate Zn(2+): Cys333, His384, and His510.

Belongs to the class-II aminoacyl-tRNA synthetase family. In terms of assembly, homodimer. Requires Zn(2+) as cofactor.

It localises to the cytoplasm. The enzyme catalyses tRNA(Thr) + L-threonine + ATP = L-threonyl-tRNA(Thr) + AMP + diphosphate + H(+). Functionally, catalyzes the attachment of threonine to tRNA(Thr) in a two-step reaction: L-threonine is first activated by ATP to form Thr-AMP and then transferred to the acceptor end of tRNA(Thr). Also edits incorrectly charged L-seryl-tRNA(Thr). The polypeptide is Threonine--tRNA ligase (Burkholderia lata (strain ATCC 17760 / DSM 23089 / LMG 22485 / NCIMB 9086 / R18194 / 383)).